The following is a 395-amino-acid chain: Acid ceramidase (395 aa).

The N-terminal stretch at 1-20 (MLGWSRLTFILLSGIVTCLV) is a signal peptide. A disulfide bridge connects residues Cys-31 and Cys-340. Residue Cys-143 is the Nucleophile of the active site. Asn-195, Asn-259, Asn-286, and Asn-342 each carry an N-linked (GlcNAc...) asparagine glycan. Cys-388 and Cys-392 are disulfide-bonded.

Belongs to the acid ceramidase family. In terms of assembly, heterodimer; disulfide-linked. The heterodimer is composed of the disulfide-linked alpha and beta chains produced by autocatalytic cleavage of the precursor. Post-translationally, N-glycosylated. In terms of processing, proteolytically cleaved into two chains alpha and beta that remain associated via a disulfide bond. Cleavage gives rise to a conformation change that activates the enzyme. The same catalytic Cys residue mediates the autoproteolytic cleavage and subsequent hydrolysis of lipid substrates. The beta chain may undergo an additional C-terminal processing.

It is found in the lysosome. Its subcellular location is the secreted. The enzyme catalyses an N-acylsphing-4-enine + H2O = sphing-4-enine + a fatty acid. It catalyses the reaction N-dodecanoylsphing-4-enine + H2O = dodecanoate + sphing-4-enine. It carries out the reaction N-tetradecanoylsphing-4-enine + H2O = tetradecanoate + sphing-4-enine. The catalysed reaction is N-hexadecanoylsphing-4-enine + H2O = sphing-4-enine + hexadecanoate. The enzyme catalyses N-octadecanoylsphing-4-enine + H2O = sphing-4-enine + octadecanoate. It catalyses the reaction N-dodecanoyl-(4R)-hydroxysphinganine + H2O = (4R)-hydroxysphinganine + dodecanoate. It carries out the reaction N-(dodecanoyl)-sphinganine + H2O = dodecanoate + sphinganine. The catalysed reaction is N-(acetyl)-sphing-4-enine + H2O = sphing-4-enine + acetate. The enzyme catalyses N-(hexanoyl)sphing-4-enine + H2O = hexanoate + sphing-4-enine. It catalyses the reaction N-octanoylsphing-4-enine + H2O = octanoate + sphing-4-enine. It carries out the reaction N-(9Z-octadecenoyl)-sphing-4-enine + H2O = sphing-4-enine + (9Z)-octadecenoate. The catalysed reaction is N-dodecanoylethanolamine + H2O = dodecanoate + ethanolamine. It participates in lipid metabolism; sphingolipid metabolism. Its function is as follows. Lysosomal ceramidase that hydrolyzes sphingolipid ceramides into sphingosine and free fatty acids at acidic pH. Ceramides, sphingosine, and its phosphorylated form sphingosine-1-phosphate are bioactive lipids that mediate cellular signaling pathways regulating several biological processes including cell proliferation, apoptosis and differentiation. Has a higher catalytic efficiency towards C12-ceramides versus other ceramides. Also catalyzes the reverse reaction allowing the synthesis of ceramides from fatty acids and sphingosine. For the reverse synthetic reaction, the natural sphingosine D-erythro isomer is more efficiently utilized as a substrate compared to D-erythro-dihydrosphingosine and D-erythro-phytosphingosine, while the fatty acids with chain lengths of 12 or 14 carbons are the most efficiently used. Also has an N-acylethanolamine hydrolase activity. By regulating the levels of ceramides, sphingosine and sphingosine-1-phosphate in the epidermis, mediates the calcium-induced differentiation of epidermal keratinocytes. Also indirectly regulates tumor necrosis factor/TNF-induced apoptosis. By regulating the intracellular balance between ceramides and sphingosine, in adrenocortical cells, probably also acts as a regulator of steroidogenesis. This is Acid ceramidase from Bos taurus (Bovine).